We begin with the raw amino-acid sequence, 362 residues long: MSDYTQQLQDKKDHLKTLFAGLDVPEWEVYESPDKHYRMRAEFRIWHEGGEMFYAMFEKGQKAGGASLIRCDRFEAASEAVNRLMPELIAVAAQSAELRNRWYAVEFLSTLSGEMLVTMIYHKRLDDEWMQAAQALQQQLDTSVIGRSRGQKIVLKQDYVTETLKVGNRDFRYRQIEGGFTQPNAAVCQKMLEWACGAAEGLGGDLLELYCGNGNFTLPLSEKFERVLATEISKTSVGAAQWNIEANGIGNIKIARLSAEEFTEAYTGKREFARLKDGGIALTDYAFSTIFVDPPRAGIDEETLKLVSQFDNIIYISCNPETLRANLDTLVETHVVERAALFDQFPFTHHIESGVLLKKKIL.

S-adenosyl-L-methionine is bound by residues Gln182, Tyr210, Asn215, Glu231, and Asp293. Residue Cys318 is the Nucleophile of the active site. Glu352 serves as the catalytic Proton acceptor.

This sequence belongs to the class I-like SAM-binding methyltransferase superfamily. RNA M5U methyltransferase family. TrmA subfamily.

It carries out the reaction uridine(54) in tRNA + S-adenosyl-L-methionine = 5-methyluridine(54) in tRNA + S-adenosyl-L-homocysteine + H(+). The catalysed reaction is uridine(341) in tmRNA + S-adenosyl-L-methionine = 5-methyluridine(341) in tmRNA + S-adenosyl-L-homocysteine + H(+). In terms of biological role, dual-specificity methyltransferase that catalyzes the formation of 5-methyluridine at position 54 (m5U54) in all tRNAs, and that of position 341 (m5U341) in tmRNA (transfer-mRNA). The sequence is that of tRNA/tmRNA (uracil-C(5))-methyltransferase from Neisseria meningitidis serogroup A / serotype 4A (strain DSM 15465 / Z2491).